The following is a 404-amino-acid chain: Serine/threonine transporter SstT (404 aa).

8 helical membrane-spanning segments follow: residues 17 to 37 (IGIG…LTGF), 39 to 59 (ILGK…VFAL), 75 to 95 (MTLI…VAVL), 138 to 158 (ALAT…GLAL), 179 to 199 (IVVW…FTTI), 212 to 232 (FLIL…NPLI), 287 to 307 (IPLG…VLTL), and 313 to 333 (FGIP…AVSA).

The protein belongs to the dicarboxylate/amino acid:cation symporter (DAACS) (TC 2.A.23) family.

Its subcellular location is the cell membrane. The catalysed reaction is L-serine(in) + Na(+)(in) = L-serine(out) + Na(+)(out). It carries out the reaction L-threonine(in) + Na(+)(in) = L-threonine(out) + Na(+)(out). Involved in the import of serine and threonine into the cell, with the concomitant import of sodium (symport system). In Streptococcus pyogenes serotype M5 (strain Manfredo), this protein is Serine/threonine transporter SstT.